We begin with the raw amino-acid sequence, 345 residues long: Tryptophan--tRNA ligase (345 aa).

ATP-binding positions include 12-14 (RPT) and 20-21 (GH). The 'HIGH' region motif lies at 13-21 (PTGKLHLGH). Aspartate 144 is an L-tryptophan binding site. ATP is bound by residues 156–158 (GKD), leucine 194, and 202–206 (KMSKS). A 'KMSKS' region motif is present at residues 202-206 (KMSKS).

Belongs to the class-I aminoacyl-tRNA synthetase family. Homodimer.

The protein resides in the cytoplasm. The catalysed reaction is tRNA(Trp) + L-tryptophan + ATP = L-tryptophyl-tRNA(Trp) + AMP + diphosphate + H(+). Catalyzes the attachment of tryptophan to tRNA(Trp). This is Tryptophan--tRNA ligase from Chlamydia caviae (strain ATCC VR-813 / DSM 19441 / 03DC25 / GPIC) (Chlamydophila caviae).